The following is a 570-amino-acid chain: Adenine deaminase (570 aa).

The protein belongs to the metallo-dependent hydrolases superfamily. Adenine deaminase family. The cofactor is Mn(2+).

It catalyses the reaction adenine + H2O + H(+) = hypoxanthine + NH4(+). In Petrotoga mobilis (strain DSM 10674 / SJ95), this protein is Adenine deaminase.